A 154-amino-acid chain; its full sequence is Histone H2B.5 (154 aa).

The segment covering 1–25 (MAPKAEKKPAAKKVAEEEPSEKAAP) has biased composition (basic and acidic residues). Residues 1–62 (MAPKAEKKPA…DKKGRKKAKK (62 aa)) are disordered. N6-acetyllysine is present on residues lysine 7 and lysine 39. Residue lysine 150 forms a Glycyl lysine isopeptide (Lys-Gly) (interchain with G-Cter in ubiquitin) linkage.

Belongs to the histone H2B family. As to quaternary structure, the nucleosome is a histone octamer containing two molecules each of H2A, H2B, H3 and H4 assembled in one H3-H4 heterotetramer and two H2A-H2B heterodimers. The octamer wraps approximately 147 bp of DNA. In terms of processing, can be acetylated to form H2BK6ac and H2BK33ac. Post-translationally, monoubiquitinated to form H2BK143ub1; may give a specific tag for epigenetic transcriptional activation.

It localises to the nucleus. Its subcellular location is the chromosome. Its function is as follows. Core component of nucleosome. Nucleosomes wrap and compact DNA into chromatin, limiting DNA accessibility to the cellular machineries which require DNA as a template. Histones thereby play a central role in transcription regulation, DNA repair, DNA replication and chromosomal stability. DNA accessibility is regulated via a complex set of post-translational modifications of histones, also called histone code, and nucleosome remodeling. The chain is Histone H2B.5 from Zea mays (Maize).